The primary structure comprises 878 residues: Indoleacetate decarboxylase (878 aa).

Residues 42-750 enclose the PFL domain; it reads DRTKRMKERF…VTGATPDGRL (709 aa). Cys-500 acts as the Cysteine radical intermediate in catalysis. Catalysis depends on Glu-502, which acts as the Proton acceptor. The 121-residue stretch at 758 to 878 folds into the Glycine radical domain; the sequence is GILSASPGTD…VIARTEYDAL (121 aa). Position 853 is a glycine radical (Gly-853).

This sequence belongs to the glycyl radical enzyme (GRE) family. In terms of assembly, homodimer (predominantly) and monomer. Post-translationally, requires the activating protein OsIADAE to generate the key active site glycyl radical on Gly-853 that is involved in catalysis.

The enzyme catalyses (indol-3-yl)acetate + H(+) = skatole + CO2. The protein operates within amino-acid degradation. Functionally, glycyl radical enzyme that catalyzes the terminal step of tryptophan fermentation, the decarboxylation of indoleacetate to form skatole, a malodorous compound that contributes to the characteristic smell of animal feces. No activity is detected with phenylacetate or p-hydroxyphenylacetate as substrates, indicating high substrate specificity. The sequence is that of Indoleacetate decarboxylase from Tractidigestivibacter scatoligenes (Olsenella scatoligenes).